The following is an 80-amino-acid chain: Acyl carrier protein (80 aa).

A Carrier domain is found at 4 to 79; sequence EAILEKVRSI…DAVKYIEDKQ (76 aa). Ser39 carries the O-(pantetheine 4'-phosphoryl)serine modification.

The protein belongs to the acyl carrier protein (ACP) family. In terms of processing, 4'-phosphopantetheine is transferred from CoA to a specific serine of apo-ACP by AcpS. This modification is essential for activity because fatty acids are bound in thioester linkage to the sulfhydryl of the prosthetic group.

It is found in the cytoplasm. Its pathway is lipid metabolism; fatty acid biosynthesis. Its function is as follows. Carrier of the growing fatty acid chain in fatty acid biosynthesis. The sequence is that of Acyl carrier protein from Prochlorococcus marinus (strain MIT 9313).